A 366-amino-acid chain; its full sequence is Peptide chain release factor 2 (366 aa).

N5-methylglutamine is present on Gln-246.

Belongs to the prokaryotic/mitochondrial release factor family. Methylated by PrmC. Methylation increases the termination efficiency of RF2.

The protein resides in the cytoplasm. Functionally, peptide chain release factor 2 directs the termination of translation in response to the peptide chain termination codons UGA and UAA. The sequence is that of Peptide chain release factor 2 from Frankia casuarinae (strain DSM 45818 / CECT 9043 / HFP020203 / CcI3).